We begin with the raw amino-acid sequence, 556 residues long: Trigger factor (556 aa).

Residues 169 to 255 (GDVVVIDFAA…LREIKAKELP (87 aa)) enclose the PPIase FKBP-type domain. Residues 438-452 (VDSEGNPTQAPTSLA) show a composition bias toward polar residues. Positions 438–556 (VDSEGNPTQA…KPSKKDKKGK (119 aa)) are disordered. Residues 461 to 472 (PEAEFEADEPEA) show a composition bias toward acidic residues. Low complexity-rich tracts occupy residues 486 to 503 (ETAT…AEAE) and 511 to 526 (EASP…AEAT).

It belongs to the FKBP-type PPIase family. Tig subfamily.

The protein resides in the cytoplasm. The catalysed reaction is [protein]-peptidylproline (omega=180) = [protein]-peptidylproline (omega=0). Functionally, involved in protein export. Acts as a chaperone by maintaining the newly synthesized protein in an open conformation. Functions as a peptidyl-prolyl cis-trans isomerase. The sequence is that of Trigger factor from Synechococcus sp. (strain JA-2-3B'a(2-13)) (Cyanobacteria bacterium Yellowstone B-Prime).